We begin with the raw amino-acid sequence, 192 residues long: UPF0312 protein Avin_03250 (192 aa).

A signal peptide spans M1 to A23.

The protein belongs to the UPF0312 family. Type 1 subfamily.

Its subcellular location is the periplasm. This Azotobacter vinelandii (strain DJ / ATCC BAA-1303) protein is UPF0312 protein Avin_03250.